The chain runs to 583 residues: Protein disulfide-isomerase-like protein of the testis (583 aa).

The signal sequence occupies residues 1–17 (MDLLWMPLLLVAARISA). 4 N-linked (GlcNAc...) asparagine glycosylation sites follow: asparagine 58, asparagine 128, asparagine 160, and asparagine 340. A Thioredoxin domain is found at 388 to 451 (LVKQLVGKNF…IAKIDITAND (64 aa)). Composition is skewed to basic and acidic residues over residues 522-531 (EVPMMKKELP) and 540-559 (NVTKHVSKLEESAGKKKTSE). The disordered stretch occupies residues 522–583 (EVPMMKKELP…KKKPKVKEEL (62 aa)). Residue asparagine 540 is glycosylated (N-linked (GlcNAc...) asparagine). Over residues 573–583 (QKKKPKVKEEL) the composition is skewed to basic residues. The Prevents secretion from ER motif lies at 580-583 (KEEL).

This sequence belongs to the protein disulfide isomerase family. As to quaternary structure, homodimer. The homodimer is not disulfide-linked. Interacts with ERO1A and CLGN. Post-translationally, N-glycosylated.

The protein resides in the endoplasmic reticulum. Functionally, probable redox-inactive chaperone involved in spermatogenesis. In Macaca fascicularis (Crab-eating macaque), this protein is Protein disulfide-isomerase-like protein of the testis (PDILT).